The chain runs to 214 residues: Non-structural protein NP-1 (214 aa).

2 disordered regions span residues 1–87 and 192–214; these read MSSE…TNPY and ESEE…NASN. The segment covering 33–43 has biased composition (basic residues); that stretch reads SRSRSPIRRHG. Residues 44 to 55 show a composition bias toward basic and acidic residues; it reads EKNLEYAHHSNQ. The span at 56–71 shows a compositional bias: polar residues; that stretch reads ENRQSSYTALKTSDQA. Over residues 192–201 the composition is skewed to acidic residues; sequence ESEEVTDEEM.

It belongs to the Bocaparvovirus Non-structural protein NP-1 family.

The protein localises to the host nucleus. Required for the expression of the capsid proteins. Performs the splicing and internal polyadenylation of the viral capsid-encoding mRNA precursor, which allows its maturation and expression. Transactivates the viral promoter. The polypeptide is Non-structural protein NP-1 (NP1) (Human bocavirus 2 (HBoV2)).